Reading from the N-terminus, the 800-residue chain is Probable inorganic carbon transporter subunit DabA (800 aa).

The Zn(2+) site is built by Cys-329, Asp-331, His-488, and Cys-503.

The protein belongs to the inorganic carbon transporter (TC 9.A.2) DabA family. As to quaternary structure, forms a complex with DabB. Zn(2+) serves as cofactor.

It localises to the cell inner membrane. In terms of biological role, part of an energy-coupled inorganic carbon pump. This Roseobacter denitrificans (strain ATCC 33942 / OCh 114) (Erythrobacter sp. (strain OCh 114)) protein is Probable inorganic carbon transporter subunit DabA.